The following is a 185-amino-acid chain: Peptidyl-tRNA hydrolase (185 aa).

TRNA is bound at residue tyrosine 14. The Proton acceptor role is filled by histidine 19. Tyrosine 64, asparagine 66, and asparagine 112 together coordinate tRNA.

Belongs to the PTH family. As to quaternary structure, monomer.

The protein localises to the cytoplasm. It catalyses the reaction an N-acyl-L-alpha-aminoacyl-tRNA + H2O = an N-acyl-L-amino acid + a tRNA + H(+). In terms of biological role, hydrolyzes ribosome-free peptidyl-tRNAs (with 1 or more amino acids incorporated), which drop off the ribosome during protein synthesis, or as a result of ribosome stalling. Functionally, catalyzes the release of premature peptidyl moieties from peptidyl-tRNA molecules trapped in stalled 50S ribosomal subunits, and thus maintains levels of free tRNAs and 50S ribosomes. In Pediococcus pentosaceus (strain ATCC 25745 / CCUG 21536 / LMG 10740 / 183-1w), this protein is Peptidyl-tRNA hydrolase.